Consider the following 291-residue polypeptide: N-acetylmannosamine kinase (291 aa).

Residues 5 to 12 and 132 to 139 contribute to the ATP site; these read AIDIGGTK and GVGGGVVC. 4 residues coordinate Zn(2+): His156, Cys166, Cys168, and Cys173.

The protein belongs to the ROK (NagC/XylR) family. NanK subfamily. In terms of assembly, homodimer.

It catalyses the reaction an N-acyl-D-mannosamine + ATP = an N-acyl-D-mannosamine 6-phosphate + ADP + H(+). Its pathway is amino-sugar metabolism; N-acetylneuraminate degradation; D-fructose 6-phosphate from N-acetylneuraminate: step 2/5. Its function is as follows. Catalyzes the phosphorylation of N-acetylmannosamine (ManNAc) to ManNAc-6-P. The protein is N-acetylmannosamine kinase of Salmonella heidelberg (strain SL476).